The chain runs to 3224 residues: MRRSKADVERYIASVQGSTPSPRQKSMKGFYFAKLYYEAKEYDLAKKYICTYINVQERDPKAHRFLGLLYELEENTDKAVECYRRSVELNPTQKDLVLKIAELLCKNDVTDGRAKYWLERAAKLFPGSPAIYKLKEQLLDCEGEDGWNKLFDLIQSELYVRPDDVHVNIRLVEVYRSTKRLKDAVAHCHEAERNIALRSSLEWNSCVVQTLKEYLESLQCLESDKSDWRATNTDLLLAYANLMLLTLSTRDVQESRELLQSFDSALQSVKSLGGNDELSATFLEMKGHFYMHAGSLLLKMGQHSSNVQWRALSELAALCYLIAFQVPRPKIKLIKGEAGQNLLEMMACDRLSQSGHMLLNLSRGKQDFLKEIVETFANKSGQSALYDALFSSQSPKDTSFLGSDDIGNIDVREPELEDLTRYDVGAIRAHNGSLQHLTWLGLQWNSLPALPGIRKWLKQLFHHLPHETSRLETNAPESICILDLEVFLLGVVYTSHLQLKEKCNSHHSSYQPLCLPLPVCKQLCTERQKSWWDAVCTLIHRKAVPGNVAKLRLLVQHEINTLRAQEKHGLQPALLVHWAECLQKTGSGLNSFYDQREYIGRSVHYWKKVLPLLKIIKKKNSIPEPIDPLFKHFHSVDIQASEIVEYEEDAHITFAILDAVNGNIEDAVTAFESIKSVVSYWNLALIFHRKAEDIENDALSPEEQEECKNYLRKTRDYLIKIIDDSDSNLSVVKKLPVPLESVKEMLNSVMQELEDYSEGGPLYKNGSLRNADSEIKHSTPSPTRYSLSPSKSYKYSPKTPPRWAEDQNSLLKMICQQVEAIKKEMQELKLNSSNSASPHRWPTENYGPDSVPDGYQGSQTFHGAPLTVATTGPSVYYSQSPAYNSQYLLRPAANVTPTKGPVYGMNRLPPQQHIYAYPQQMHTPPVQSSSACMFSQEMYGPPALRFESPATGILSPRGDDYFNYNVQQTSTNPPLPEPGYFTKPPIAAHASRSAESKTIEFGKTNFVQPMPGEGLRPSLPTQAHTTQPTPFKFNSNFKSNDGDFTFSSPQVVTQPPPAAYSNSESLLGLLTSDKPLQGDGYSGAKPIPGGQTIGPRNTFNFGSKNVSGISFTENMGSSQQKNSGFRRSDDMFTFHGPGKSVFGTPTLETANKNHETDGGSAHGDDDDDGPHFEPVVPLPDKIEVKTGEEDEEEFFCNRAKLFRFDVESKEWKERGIGNVKILRHKTSGKIRLLMRREQVLKICANHYISPDMKLTPNAGSDRSFVWHALDYADELPKPEQLAIRFKTPEEAALFKCKFEEAQSILKAPGTNVAMASNQAVRIVKEPTSHDNKDICKSDAGNLNFEFQVAKKEGSWWHCNSCSLKNASTAKKCVSCQNLNPSNKELVGPPLAETVFTPKTSPENVQDRFALVTPKKEGHWDCSICLVRNEPTVSRCIACQNTKSANKSGSSFVHQASFKFGQGDLPKPINSDFRSVFSTKEGQWDCSACLVQNEGSSTKCAACQNPRKQSLPATSIPTPASFKFGTSETSKTLKSGFEDMFAKKEGQWDCSSCLVRNEANATRCVACQNPDKPSPSTSVPAPASFKFGTSETSKAPKSGFEGMFTKKEGQWDCSVCLVRNEASATKCIACQNPGKQNQTTSAVSTPASSETSKAPKSGFEGMFTKKEGQWDCSVCLVRNEASATKCIACQNPGKQNQTTSAVSTPASSETSKAPKSGFEGMFTKKEGQWDCSVCLVRNEASATKCIACQCPSKQNQTTAISTPASSEISKAPKSGFEGMFIRKGQWDCSVCCVQNESSSLKCVACDASKPTHKPIAEAPSAFTLGSEMKLHDSSGSQVGTGFKSNFSEKASKFGNTEQGFKFGHVDQENSPSFMFQGSSNTEFKSTKEGFSIPVSADGFKFGISEPGNQEKKSEKPLENGTGFQAQDISGQKNGRGVIFGQTSSTFTFADLAKSTSGEGFQFGKKDPNFKGFSGAGEKLFSSQYGKMANKANTSGDFEKDDDAYKTEDSDDIHFEPVVQMPEKVELVTGEEDEKVLYSQRVKLFRFDAEVSQWKERGLGNLKILKNEVNGKLRMLMRREQVLKVCANHWITTTMNLKPLSGSDRAWMWLASDFSDGDAKLEQLAAKFKTPELAEEFKQKFEECQRLLLDIPLQTPHKLVDTGRAAKLIQRAEEMKSGLKDFKTFLTNDQTKVTEEENKGSGTGAAGASDTTIKPNPENTGPTLEWDNYDLREDALDDSVSSSSVHASPLASSPVRKNLFRFGESTTGFNFSFKSALSPSKSPAKLNQSGTSVGTDEESDVTQEEERDGQYFEPVVPLPDLVEVSSGEENEQVVFSHRAKLYRYDKDVGQWKERGIGDIKILQNYDNKQVRIVMRRDQVLKLCANHRITPDMTLQNMKGTERVWLWTACDFADGERKVEHLAVRFKLQDVADSFKKIFDEAKTAQEKDSLITPHVSRSSTPRESPCGKIAVAVLEETTRERTDVIQGDDVADATSEVEVSSTSETTPKAVVSPPKFVFGSESVKSIFSSEKSKPFAFGNSSATGSLFGFSFNAPLKSNNSETSSVAQSGSESKVEPKKCELSKNSDIEQSSDSKVKNLFASFPTEESSINYTFKTPEKAKEKKKPEDSPSDDDVLIVYELTPTAEQKALATKLKLPPTFFCYKNRPDYVSEEEEDDEDFETAVKKLNGKLYLDGSEKCRPLEENTADNEKECIIVWEKKPTVEEKAKADTLKLPPTFFCGVCSDTDEDNGNGEDFQSELQKVQEAQKSQTEEITSTTDSVYTGGTEVMVPSFCKSEEPDSITKSISSPSVSSETMDKPVDLSTRKEIDTDSTSQGESKIVSFGFGSSTGLSFADLASSNSGDFAFGSKDKNFQWANTGAAVFGTQSVGTQSAGKVGEDEDGSDEEVVHNEDIHFEPIVSLPEVEVKSGEEDEEILFKERAKLYRWDRDVSQWKERGVGDIKILWHTMKNYYRILMRRDQVFKVCANHVITKTMELKPLNVSNNALVWTASDYADGEAKVEQLAVRFKTKEVADCFKKTFEECQQNLMKLQKGHVSLAAELSKETNPVVFFDVCADGEPLGRITMELFSNIVPRTAENFRALCTGEKGFGFKNSIFHRVIPDFVCQGGDITKHDGTGGQSIYGDKFEDENFDVKHTGPGLLSMANQGQNTNNSQFVITLKKAEHLDFKHVVFGFVKDGMDTVKKIESFGSPKGSVCRRITITECGQI.

The residue at position 19 (Thr19) is a Phosphothreonine. Ser21 bears the Phosphoserine mark. TPR repeat units follow at residues 26–59 (SMKG…QERD), 60–93 (PKAH…NPTQ), 94–128 (KDLV…FPGS), 165–201 (VHVN…RSSL), 287–319 (GHFY…AALC), 583–616 (QKTG…LKII), and 648–681 (EDAH…VSYW). The tract at residues 760 to 802 (GPLYKNGSLRNADSEIKHSTPSPTRYSLSPSKSYKYSPKTPPR) is disordered. At Thr779 the chain carries Phosphothreonine. A phosphoserine mark is found at Ser781, Ser788, and Ser837. Positions 785 to 797 (YSLSPSKSYKYSP) are enriched in low complexity. An Asymmetric dimethylarginine modification is found at Arg945. 2 positions are modified to phosphoserine: Ser948 and Ser955. Repeat unit 1 spans residues 1001 to 1002 (FG). The segment at 1001–3206 (FGKTNFVQPM…DTVKKIESFG (2206 aa)) is 22 X 2 AA repeats of F-G. At Arg1016 the chain carries Asymmetric dimethylarginine; alternate. Omega-N-methylarginine; alternate is present on Arg1016. Thr1098 is modified (phosphothreonine). Repeat unit 2 spans residues 1101–1102 (FG). Residues Ser1103, Ser1107, and Ser1110 each carry the phosphoserine modification. Residues 1138–1174 (GKSVFGTPTLETANKNHETDGGSAHGDDDDDGPHFEP) form a disordered region. The stretch at 1142–1143 (FG) is repeat 3. Thr1144 is modified (phosphothreonine). Phosphoserine occurs at positions 1160 and 1249. Residues 1171-1307 (HFEPVVPLPD…FEEAQSILKA (137 aa)) enclose the RanBD1 1 domain. Lys1350 participates in a covalent cross-link: Glycyl lysine isopeptide (Lys-Gly) (interchain with G-Cter in SUMO2). A RanBP2-type 1 zinc finger spans residues 1351-1381 (KEGSWWHCNSCSLKNASTAKKCVSCQNLNPS). Thr1396 and Thr1412 each carry phosphothreonine. Lys1414 is covalently cross-linked (Glycyl lysine isopeptide (Lys-Gly) (interchain with G-Cter in SUMO2)). The segment at 1415–1444 (KEGHWDCSICLVRNEPTVSRCIACQNTKSA) adopts a RanBP2-type 2 zinc-finger fold. A phosphoserine mark is found at Ser1443, Ser1450, and Ser1456. Copy 4 of the repeat occupies 1459 to 1460 (FG). The RanBP2-type 3 zinc finger occupies 1479–1508 (KEGQWDCSACLVQNEGSSTKCAACQNPRKQ). 2 positions are modified to phosphoserine: Ser1509 and Ser1520. Copy 5 of the repeat occupies 1523-1524 (FG). The RanBP2-type 4 zinc-finger motif lies at 1543-1572 (KEGQWDCSSCLVRNEANATRCVACQNPDKP). The segment at 1569 to 1595 (PDKPSPSTSVPAPASFKFGTSETSKAP) is disordered. Position 1573 is a phosphoserine (Ser1573). The segment covering 1573-1583 (SPSTSVPAPAS) has biased composition (low complexity). The stretch at 1586 to 1587 (FG) is repeat 6. Lys1596 participates in a covalent cross-link: Glycyl lysine isopeptide (Lys-Gly) (interchain with G-Cter in SUMO2). Lys1605 is covalently cross-linked (Glycyl lysine isopeptide (Lys-Gly) (interchain with G-Cter in SUMO1); alternate). Lys1605 is covalently cross-linked (Glycyl lysine isopeptide (Lys-Gly) (interchain with G-Cter in SUMO2); alternate). A RanBP2-type 5 zinc finger spans residues 1606–1635 (KEGQWDCSVCLVRNEASATKCIACQNPGKQ). Polar residues predominate over residues 1633 to 1653 (GKQNQTTSAVSTPASSETSKA). The tract at residues 1633–1657 (GKQNQTTSAVSTPASSETSKAPKSG) is disordered. Residue Lys1655 forms a Glycyl lysine isopeptide (Lys-Gly) (interchain with G-Cter in SUMO2) linkage. A Glycyl lysine isopeptide (Lys-Gly) (interchain with G-Cter in SUMO1); alternate cross-link involves residue Lys1664. Lys1664 is covalently cross-linked (Glycyl lysine isopeptide (Lys-Gly) (interchain with G-Cter in SUMO2); alternate). Residues 1665 to 1694 (KEGQWDCSVCLVRNEASATKCIACQNPGKQ) form a RanBP2-type 6 zinc finger. Residues 1692–1712 (GKQNQTTSAVSTPASSETSKA) are compositionally biased toward polar residues. The segment at 1692–1716 (GKQNQTTSAVSTPASSETSKAPKSG) is disordered. Lys1714 participates in a covalent cross-link: Glycyl lysine isopeptide (Lys-Gly) (interchain with G-Cter in SUMO2). A Glycyl lysine isopeptide (Lys-Gly) (interchain with G-Cter in SUMO1); alternate cross-link involves residue Lys1723. Lys1723 participates in a covalent cross-link: Glycyl lysine isopeptide (Lys-Gly) (interchain with G-Cter in SUMO2); alternate. 2 RanBP2-type zinc fingers span residues 1724-1753 (KEGQ…PSKQ) and 1781-1810 (RKGQ…SKPT). A phosphoserine mark is found at Ser1833 and Ser1835. 2 repeat units span residues 1852-1853 (FG) and 1861-1862 (FG). Ser1869 and Ser1871 each carry phosphoserine. The stretch at 1900–1901 (FG) is repeat 9. The disordered stretch occupies residues 1903-1928 (SEPGNQEKKSEKPLENGTGFQAQDIS). Basic and acidic residues predominate over residues 1907-1916 (NQEKKSEKPL). Tandem repeats lie at residues 1938–1939 (FG) and 1961–1962 (FG). Lys1977 carries the post-translational modification N6-acetyllysine. Thr2005 bears the Phosphothreonine mark. At Ser2008 the chain carries Phosphoserine. Positions 2012–2148 (HFEPVVQMPE…FEECQRLLLD (137 aa)) constitute a RanBD1 2 domain. Lys2022 participates in a covalent cross-link: Glycyl lysine isopeptide (Lys-Gly) (interchain with G-Cter in SUMO2). The segment at 2147–2287 (LDIPLQTPHK…SKSPAKLNQS (141 aa)) is interaction with BICD2. Residue Thr2153 is modified to Phosphothreonine. Residues 2188-2224 (QTKVTEEENKGSGTGAAGASDTTIKPNPENTGPTLEW) are disordered. Over residues 2211–2220 (IKPNPENTGP) the composition is skewed to polar residues. Residues Ser2246 and Ser2251 each carry the phosphoserine modification. Repeat unit 12 spans residues 2260 to 2261 (FG). Phosphoserine occurs at positions 2270, 2280, and 2290. Residues 2273–2284 (SALSPSKSPAKL) show a composition bias toward low complexity. The interval 2273–2307 (SALSPSKSPAKLNQSGTSVGTDEESDVTQEEERDG) is disordered. Position 2293 is a phosphothreonine (Thr2293). A compositionally biased stretch (acidic residues) spans 2293–2305 (TDEESDVTQEEER). The residue at position 2297 (Ser2297) is a Phosphoserine. One can recognise a RanBD1 3 domain in the interval 2309 to 2445 (YFEPVVPLPD…FDEAKTAQEK (137 aa)). Residues Ser2462, Ser2493, and Ser2510 each carry the phosphoserine modification. Positions 2486 to 2509 (DDVADATSEVEVSSTSETTPKAVV) are disordered. The segment covering 2492–2504 (TSEVEVSSTSETT) has biased composition (low complexity). Repeat unit 13 spans residues 2516–2517 (FG). Lys2522 is covalently cross-linked (Glycyl lysine isopeptide (Lys-Gly) (interchain with G-Cter in SUMO2)). At Ser2526 the chain carries Phosphoserine. 2 tandem repeats follow at residues 2535 to 2536 (FG) and 2545 to 2546 (FG). The segment covering 2556–2569 (NNSETSSVAQSGSE) has biased composition (polar residues). Residues 2556–2584 (NNSETSSVAQSGSESKVEPKKCELSKNSD) are disordered. A compositionally biased stretch (basic and acidic residues) spans 2570 to 2584 (SKVEPKKCELSKNSD). Lys2592 is covalently cross-linked (Glycyl lysine isopeptide (Lys-Gly) (interchain with G-Cter in SUMO)). A Glycyl lysine isopeptide (Lys-Gly) (interchain with G-Cter in SUMO1); alternate cross-link involves residue Lys2594. Lys2594 is covalently cross-linked (Glycyl lysine isopeptide (Lys-Gly) (interchain with G-Cter in SUMO2); alternate). Lys2612 is covalently cross-linked (Glycyl lysine isopeptide (Lys-Gly) (interchain with G-Cter in SUMO2)). At Thr2613 the chain carries Phosphothreonine. The tract at residues 2631-2635 (DVLIV) is interaction with sumoylated RANGAP1. 2 consecutive repeat copies span residues 2633-2685 (LIVY…KKLN) and 2711-2761 (IIVW…QKVQ). The interaction with UBE2I stretch occupies residues 2633 to 2685 (LIVYELTPTAEQKALATKLKLPPTFFCYKNRPDYVSEEEEDDEDFETAVKKLN). Residues 2633 to 2710 (LIVYELTPTA…ENTADNEKEC (78 aa)) form a required for E3 SUMO-ligase activity region. The 2 X 50 AA approximate repeats stretch occupies residues 2633–2761 (LIVYELTPTA…DFQSELQKVQ (129 aa)). The residue at position 2666 (Tyr2666) is a Phosphotyrosine. Phosphoserine occurs at positions 2668 and 2741. Residues 2686–2761 (GKLYLDGSEK…DFQSELQKVQ (76 aa)) form an interaction with SUMO1 region. Thr2743 bears the Phosphothreonine mark. Lys2792 participates in a covalent cross-link: Glycyl lysine isopeptide (Lys-Gly) (interchain with G-Cter in SUMO2). The tract at residues 2793–2818 (SEEPDSITKSISSPSVSSETMDKPVD) is disordered. Positions 2799–2810 (ITKSISSPSVSS) are enriched in low complexity. Ser2805 bears the Phosphoserine mark. Lys2815 is covalently cross-linked (Glycyl lysine isopeptide (Lys-Gly) (interchain with G-Cter in SUMO2)). Repeat copies occupy residues 2840–2841 (FG), 2842–2843 (FG), 2863–2864 (FG), and 2880–2881 (FG). The residue at position 2900 (Ser2900) is a Phosphoserine. One can recognise a RanBD1 4 domain in the interval 2911 to 3046 (HFEPIVSLPE…FEECQQNLMK (136 aa)). The PPIase cyclophilin-type domain occupies 3067-3223 (FFDVCADGEP…RRITITECGQ (157 aa)). 3 repeat units span residues 3106 to 3107 (FG), 3189 to 3190 (FG), and 3205 to 3206 (FG). Ser3207 carries the phosphoserine modification.

Belongs to the RanBP2 E3 ligase family. As to quaternary structure, part of the nuclear pore complex. Forms a complex with NXT1, NXF1 and RANGAP1. Forms a tight complex with RANBP1 and UBE2I. Interacts with SUMO1 but not SUMO2. Interacts with PRKN. Interacts with sumoylated RANGAP1. Interacts with CDCA8. Interacts with PML (isoform PML-4). Interacts with BICD2. Interacts with MCM3AP isoform GANP. Interacts with COX11. Interacts with synaptic plasticity regulator PANTS. (Microbial infection) Interacts with HIV-1 Vpu protein; this interaction allows Vpu to down-regulate BLM sumoylation. In terms of processing, polyubiquitinated by PRKN, which leads to proteasomal degradation. Post-translationally, the inner channel of the NPC has a different redox environment from the cytoplasm and allows the formation of interchain disulfide bonds between some nucleoporins, the significant increase of these linkages upon oxidative stress reduces the permeability of the NPC.

It localises to the nucleus. It is found in the nucleus membrane. Its subcellular location is the nuclear pore complex. The protein localises to the nucleus envelope. It participates in protein modification; protein sumoylation. E3 SUMO-protein ligase which facilitates SUMO1 and SUMO2 conjugation by UBE2I. Involved in transport factor (Ran-GTP, karyopherin)-mediated protein import via the F-G repeat-containing domain which acts as a docking site for substrates. Binds single-stranded RNA (in vitro). May bind DNA. Component of the nuclear export pathway. Specific docking site for the nuclear export factor exportin-1. Inhibits EIF4E-dependent mRNA export. Sumoylates PML at 'Lys-490' which is essential for the proper assembly of PML-NB. Recruits BICD2 to the nuclear envelope and cytoplasmic stacks of nuclear pore complex known as annulate lamellae during G2 phase of cell cycle. Probable inactive PPIase with no peptidyl-prolyl cis-trans isomerase activity. This chain is E3 SUMO-protein ligase RanBP2 (RANBP2), found in Homo sapiens (Human).